The chain runs to 337 residues: Mitochondrial amidoxime-reducing component 1 (337 aa).

Residue glycine 2 is the site of N-myristoyl glycine attachment. At 2-20 (GAAGSSALARFVLLAQSRP) the chain is on the mitochondrial matrix side. Residues 21–40 (GWLGVAALGLTAVALGAVAW) form a helical; Signal-anchor for type II membrane protein membrane-spanning segment. Residues 41 to 337 (RRAWPTRRRR…VGDPVYLLGQ (297 aa)) are Cytoplasmic-facing. Positions 67, 68, and 92 each coordinate Mo-molybdopterin. The tract at residues 93–183 (FWLVINQEGN…KSQPYRLVHF (91 aa)) is MOSC N-terminal region. The MOSC domain maps to 187-335 (MRPRRPHQIA…IKVGDPVYLL (149 aa)). Residues threonine 210, serine 211, arginine 238, asparagine 240, serine 271, arginine 272, cysteine 273, and tyrosine 317 each coordinate Mo-molybdopterin.

In terms of assembly, component of a complex composed of cytochrome b5, NADH-cytochrome b5 reductase and MTARC1. The cofactor is Mo-molybdopterin.

It is found in the mitochondrion outer membrane. It localises to the membrane. It catalyses the reaction N(omega)-hydroxy-L-arginine + 2 Fe(II)-[cytochrome b5] + 2 H(+) = L-arginine + 2 Fe(III)-[cytochrome b5] + H2O. Functionally, catalyzes the reduction of N-oxygenated molecules, acting as a counterpart of cytochrome P450 and flavin-containing monooxygenases in metabolic cycles. As a component of prodrug-converting system, reduces a multitude of N-hydroxylated prodrugs particularly amidoximes, leading to increased drug bioavailability. May be involved in mitochondrial N(omega)-hydroxy-L-arginine (NOHA) reduction, regulating endogenous nitric oxide levels and biosynthesis. Postulated to cleave the N-OH bond of N-hydroxylated substrates in concert with electron transfer from NADH to cytochrome b5 reductase then to cytochrome b5, the ultimate electron donor that primes the active site for substrate reduction. In Homo sapiens (Human), this protein is Mitochondrial amidoxime-reducing component 1.